The chain runs to 357 residues: Gas vesicle ATPase GvpN (357 aa).

The segment covering 22 to 36 (ATSASKNGGRTTPSA) has biased composition (polar residues). The segment at 22-43 (ATSASKNGGRTTPSALTPRPRS) is disordered. 72–79 (GPAGTGKT) provides a ligand contact to ATP.

It belongs to the CbbQ/NirQ/NorQ/GpvN family. Forms homodimers, probably interacts with other GV proteins including GvpA.

The protein resides in the gas vesicle. The protein localises to the cytoplasm. The enzyme catalyses ATP + H2O = ADP + phosphate + H(+). Functionally, an ATPase that functions in gas vesicle formation. A minor component of the gas vesicle, also found in soluble extracts. Gas vesicles (GV) are hollow, gas filled proteinaceous nanostructures. During planktonic growth they allow positioning of the organism at a favorable depth for light or nutrient acquisition. The protein is Gas vesicle ATPase GvpN of Ancylobacter aquaticus.